The following is a 953-amino-acid chain: 26S proteasome non-ATPase regulatory subunit 1 (953 aa).

N-acetylmethionine is present on methionine 1. At threonine 273 the chain carries Phosphothreonine. The interval 277–319 is disordered; the sequence is SVPGSTNTGTVPGSEKDSDPMETEEKTASAVAGKTPDASPEPK. Serine 290 carries the post-translational modification Phosphoserine. Basic and acidic residues predominate over residues 290–303; sequence SEKDSDPMETEEKT. N6-acetyllysine is present on lysine 310. Threonine 311 carries the phosphothreonine modification. At serine 315 the chain carries Phosphoserine. PC repeat units follow at residues 403–436, 441–474, 476–510, 511–545, 547–580, 581–616, 617–649, 651–685, 686–726, and 729–761; these read TATASLGVIHKGHEKEALQLMATYLPKDTSPGSA, GGLYALGLIHANHGGDIIDYLLNQLKNASNDIVR, GGSLGLGLAAMGTARQDVYDLLKTNLYQDDAVTGE, AAGLALGLVMLGSKNAQAIEDMVGYAQETQHEKIL, GLAVGIALVMYGRMEEADALIESLCRDKDPILRR, SGMYTVAMAYCGSGNNKAIRRLLHVAVSDVNDDVRR, AAVESLGFILFRTPEQCPSVVSLLSESYNPHVR, GAAMALGICCAGTGNKEAINLLEPMTNDPVNYVRQ, GALI…DVMA, and GAILAQGILDAGGHNVTISLQSRTGHTHMPSVV. Residue lysine 720 is modified to N6-acetyllysine. Threonine 830 carries the phosphothreonine modification. Serine 834 is subject to Phosphoserine. 2 disordered regions span residues 839–881 and 930–953; these read AKKK…LDNP and AHGPKIEEEEQEPEPPEPFEYIDD. Composition is skewed to basic and acidic residues over residues 842–852 and 859–872; these read KEKEKEKKEEE and AEKKEEKEKKKEPE. Residues 936 to 953 are compositionally biased toward acidic residues; sequence EEEEQEPEPPEPFEYIDD.

It belongs to the proteasome subunit S1 family. In terms of assembly, component of the 19S proteasome regulatory particle complex. The 26S proteasome consists of a 20S core particle (CP) and two 19S regulatory subunits (RP). The regulatory particle is made of a lid composed of 9 subunits, a base containing 6 ATPases and few additional components including PSMD1. Interacts with ADRM1. Interacts with ZFAND1.

Functionally, component of the 26S proteasome, a multiprotein complex involved in the ATP-dependent degradation of ubiquitinated proteins. This complex plays a key role in the maintenance of protein homeostasis by removing misfolded or damaged proteins, which could impair cellular functions, and by removing proteins whose functions are no longer required. Therefore, the proteasome participates in numerous cellular processes, including cell cycle progression, apoptosis, or DNA damage repair. This is 26S proteasome non-ATPase regulatory subunit 1 (Psmd1) from Mus musculus (Mouse).